Here is a 199-residue protein sequence, read N- to C-terminus: NAD(P)H dehydrogenase (quinone) (199 aa).

Residues I4 to V190 form the Flavodoxin-like domain. FMN-binding positions include S10 to I15 and T79 to F81. Y12 contacts NAD(+). Residue W99 coordinates substrate. H134 serves as a coordination point for FMN.

This sequence belongs to the WrbA family. Requires FMN as cofactor.

The enzyme catalyses a quinone + NADH + H(+) = a quinol + NAD(+). The catalysed reaction is a quinone + NADPH + H(+) = a quinol + NADP(+). This Photorhabdus laumondii subsp. laumondii (strain DSM 15139 / CIP 105565 / TT01) (Photorhabdus luminescens subsp. laumondii) protein is NAD(P)H dehydrogenase (quinone).